A 547-amino-acid chain; its full sequence is G protein-coupled receptor associated sorting protein 3 (547 aa).

2 stretches are compositionally biased toward basic residues: residues 1 to 10 (MTGTKNKTRA) and 38 to 48 (AKTRAKAKAKT). The segment at 1-53 (MTGTKNKTRAQAKTEKKPVTQAKAGAEREATGVVRPVAKTRAKAKAKTGSKTD) is disordered.

It belongs to the GPRASP family. In terms of assembly, homodimer.

The protein localises to the cytoplasm. It is found in the nucleus. Functionally, survival and differentiation promoting protein that plays a role in the regulation of neurosynaptogenesis. Induces phosphatase PP2A activity which results in APP dephosphorylation and inhibits BACE1-mediated processing of APP. This chain is G protein-coupled receptor associated sorting protein 3 (GPRASP3), found in Macaca fascicularis (Crab-eating macaque).